Here is a 300-residue protein sequence, read N- to C-terminus: Cation-efflux pump FieF (300 aa).

Helical transmembrane passes span 12–32, 40–60, 82–102, and 114–134; these read AALSATVLASILLIIKIFAWW, LAALVDSLVDLAASLTNLFVV, AALAQSMFISGSALFLFLTGF, and PGLGIWVTLIALFSTLILVTF. 2 residues coordinate Zn(2+): D45 and D49. The Zn(2+) site is built by H153 and D157. The chain crosses the membrane as a helical span at residues 164 to 184; that stretch reads ILIALALSWYGFHRADALFAL.

It belongs to the cation diffusion facilitator (CDF) transporter (TC 2.A.4) family. FieF subfamily. Homodimer.

The protein localises to the cell inner membrane. The enzyme catalyses Zn(2+)(in) + H(+)(out) = Zn(2+)(out) + H(+)(in). It carries out the reaction Cd(2+)(in) + H(+)(out) = Cd(2+)(out) + H(+)(in). The catalysed reaction is Fe(2+)(in) + H(+)(out) = Fe(2+)(out) + H(+)(in). Divalent metal cation transporter which exports Zn(2+), Cd(2+) and possibly Fe(2+). May be involved in zinc and iron detoxification by efflux. This Yersinia enterocolitica serotype O:8 / biotype 1B (strain NCTC 13174 / 8081) protein is Cation-efflux pump FieF.